Consider the following 256-residue polypeptide: Imidazole glycerol phosphate synthase subunit hisF1 (256 aa).

Active-site residues include Asp11 and Asp130.

Belongs to the HisA/HisF family. In terms of assembly, heterodimer of HisH and HisF.

The protein resides in the cytoplasm. The enzyme catalyses 5-[(5-phospho-1-deoxy-D-ribulos-1-ylimino)methylamino]-1-(5-phospho-beta-D-ribosyl)imidazole-4-carboxamide + L-glutamine = D-erythro-1-(imidazol-4-yl)glycerol 3-phosphate + 5-amino-1-(5-phospho-beta-D-ribosyl)imidazole-4-carboxamide + L-glutamate + H(+). It functions in the pathway amino-acid biosynthesis; L-histidine biosynthesis; L-histidine from 5-phospho-alpha-D-ribose 1-diphosphate: step 5/9. Its function is as follows. IGPS catalyzes the conversion of PRFAR and glutamine to IGP, AICAR and glutamate. The HisF subunit catalyzes the cyclization activity that produces IGP and AICAR from PRFAR using the ammonia provided by the HisH subunit. The chain is Imidazole glycerol phosphate synthase subunit hisF1 (hisF1) from Parasynechococcus marenigrum (strain WH8102).